Here is a 150-residue protein sequence, read N- to C-terminus: 3-hydroxyacyl-[acyl-carrier-protein] dehydratase FabZ (150 aa).

Residue H54 is part of the active site.

This sequence belongs to the thioester dehydratase family. FabZ subfamily.

The protein localises to the cytoplasm. The catalysed reaction is a (3R)-hydroxyacyl-[ACP] = a (2E)-enoyl-[ACP] + H2O. Functionally, involved in unsaturated fatty acids biosynthesis. Catalyzes the dehydration of short chain beta-hydroxyacyl-ACPs and long chain saturated and unsaturated beta-hydroxyacyl-ACPs. This is 3-hydroxyacyl-[acyl-carrier-protein] dehydratase FabZ from Psychromonas ingrahamii (strain DSM 17664 / CCUG 51855 / 37).